The primary structure comprises 429 residues: D-amino acid dehydrogenase (429 aa).

3–17 (VLILGSGVIGVTSAW) serves as a coordination point for FAD.

This sequence belongs to the DadA oxidoreductase family. FAD serves as cofactor.

It catalyses the reaction a D-alpha-amino acid + A + H2O = a 2-oxocarboxylate + AH2 + NH4(+). Its function is as follows. Oxidative deamination of D-amino acids. In Xanthomonas axonopodis pv. citri (strain 306), this protein is D-amino acid dehydrogenase.